A 901-amino-acid polypeptide reads, in one-letter code: MNVSSDVDFISVGCNCLGDCLVWGQNKLAAYGAQNFIALFDPIQSKVLATLPGHKDRVNHICWVPNINEEYKNRYSSYENELLSCSSDNTIISWKQIKGGLNYQYKVVEVLKGHSDSVTNISVLDFPDGSLLMCSTSADNTVKLWRRESLTKENIDTDTLPKWECIQTIDFTPKCMECSSLAFIPGTTIPLLAVGGLEPKIHIYIQNLDSTTATLQFKKLMSLQGHQDWIRSLSFKTINEGEGEGEEEELILASSSQDFKIRLWKISKFTAEKQKQQQLDESGNGGANLLGSLSTQLSGVTSLSTKGYLFNCNSVKYIILLDAVLSGHDDWVYSIHWSPARRDQETGKKIQEQMLISASMDKTAIVWRPDRTTGIWIDESRVGDMGGNILGQYGAVFSPCSQYILSHGYNGAFHFWKQNTNQKSSFWEPQIVVSGHFGPVQDLMWSPDYSYFISCSTDRTLRLFSEWKRNNNNNNLENNKEQQIISWNEIARPQIHGYDLECFTFINKKTHVIVSGAEEKIMRAFVGSQNFVDTLLNISKVQPVNDGTQRPLAANQPSLGLSNKPYFTGGSDYNENIDNNNNNNNNNGNGEENTEDSIKMKMGGGDEGGGGEGMDTGYFEDEIPFNPEVLSEPPFEEHLLQSSLWPEIHKFYGHGNEIVAVACSADGMYLASTCRASSADQATVRIWNVSNWKECANLKGHTLTVVNLSFSHNSKYLLGVSRDRMWTLWERSASNSEEPFVKVISAPKSHGRIIWSGSWSHDDKFFATGARDKLVKVWNLDNIKDIKNACASTLPAFGSGVTCVEFAPKSSKFTGEHGDHLLAVGEDDGKITIWKSTTSTSNPKSLDWTCVHTISPLISHTLDVRRIRWRDTPTINGNSLTYQIVTCSVDHSVRIFNIKFD.

9 WD repeats span residues 11 to 50, 53 to 104, 113 to 155, 173 to 214, 225 to 274, 327 to 377, 387 to 426, 435 to 474, and 495 to 535; these read SVGC…VLAT, GHKD…LNYQ, GHSD…KENI, PKCM…TTAT, GHQD…AEKQ, GHDD…GIWI, GNIL…KSSF, GHFG…NNNN, and IHGY…VDTL. The disordered stretch occupies residues 571-598; the sequence is SDYNENIDNNNNNNNNNGNGEENTEDSI. Residues 574–591 show a composition bias toward low complexity; the sequence is NENIDNNNNNNNNNGNGE. WD repeat units follow at residues 653 to 697, 700 to 739, 749 to 788, 796 to 844, and 859 to 897; these read GHGN…ECAN, GHTL…SEEP, SHGR…DIKN, AFGS…SNPK, and SHTL…RIFN.

It belongs to the WD repeat ELP2 family. In terms of assembly, component of the elongator complex.

It localises to the cytoplasm. Its subcellular location is the nucleus. It functions in the pathway tRNA modification; 5-methoxycarbonylmethyl-2-thiouridine-tRNA biosynthesis. In terms of biological role, component of the elongator complex which is required for multiple tRNA modifications, including mcm5U (5-methoxycarbonylmethyl uridine), mcm5s2U (5-methoxycarbonylmethyl-2-thiouridine), and ncm5U (5-carbamoylmethyl uridine). The elongator complex catalyzes formation of carboxymethyluridine in the wobble base at position 34 in tRNAs. This is Elongator complex protein 2 (elp2) from Dictyostelium discoideum (Social amoeba).